The following is a 281-amino-acid chain: Apolipoprotein Eb (281 aa).

Positions 1–18 are cleaved as a signal peptide; the sequence is MRSLVVFFALAVLTGCQA. A propeptide spanning residues 19–24 is cleaved from the precursor; sequence RSLFQA. The segment at 34-66 is 3 X approximate tandem repeats; that stretch reads MVDRFWQYVSELNTQTDGMVQNIKGSQLSRELD. Tandem repeats lie at residues 67-88, 89-110, 111-132, 133-154, 155-176, 177-199, 200-227, 228-249, and 254-281. The segment at 67–281 is 9 X 22 AA approximate tandem repeats; it reads TLITDTMAEL…EATAALPTQA (215 aa).

This sequence belongs to the apolipoprotein A1/A4/E family. Homotetramer.

Its subcellular location is the secreted. It is found in the extracellular space. It localises to the extracellular matrix. Functionally, APOE is an apolipoprotein, a protein associating with lipid particles, that mainly functions in lipoprotein-mediated lipid transport between organs via the plasma and interstitial fluids. APOE is a core component of plasma lipoproteins and is involved in their production, conversion and clearance. Apolipoproteins are amphipathic molecules that interact both with lipids of the lipoprotein particle core and the aqueous environment of the plasma. This Danio rerio (Zebrafish) protein is Apolipoprotein Eb (apoeb).